Consider the following 608-residue polypeptide: uncharacterized protein (608 aa).

A signal peptide spans 1–38 (MWLQQRLKVFPGLLSSSWARRVLAVSGFLVIIYWYIFS). The Extracellular segment spans residues 39–563 (GSLFRSFWYA…EEHMAKQYRG (525 aa)). N337 is a glycosylation site (N-linked (GlcNAc...) asparagine). The helical transmembrane segment at 564 to 584 (LPFLFWFSVASLITLFHLFLF) threads the bilayer. Over 585 to 608 (KLIYNEYCGPGAKPLFRSKEDTSV) the chain is Cytoplasmic.

Its subcellular location is the membrane. This is an uncharacterized protein from Xenopus tropicalis (Western clawed frog).